The sequence spans 462 residues: Cell wall mannoprotein 1 (462 aa).

The N-terminal stretch at 1 to 18 is a signal peptide; that stretch reads MKFLSSLVVLGLSAQALA. A hexadecanoate-binding site is contributed by serine 313. The disordered stretch occupies residues 346–429; the sequence is FAGTGPAPTT…SVPAAPTGGN (84 aa). Residues 347 to 366 are compositionally biased toward low complexity; it reads AGTGPAPTTSSTPEASTAPA. Positions 399–420 are enriched in polar residues; the sequence is VWPTSTTASPDVQPTITSSGTS.

It belongs to the cell wall mannoprotein 1 family. In terms of assembly, monomer. Post-translationally, mannoprotein, glycosylated.

Its subcellular location is the secreted. It is found in the cell wall. Functionally, constitutive protein of the cell wall. Binds fatty acids and may thus serve as a fatty acid transporter between P.marneffei and host cells during infection. Abundant antigen target of host humoral immune response. The protein is Cell wall mannoprotein 1 of Talaromyces marneffei (Penicillium marneffei).